We begin with the raw amino-acid sequence, 274 residues long: Rhamnulose-1-phosphate aldolase (274 aa).

Residue E117 is part of the active site. Residues H141, H143, and H212 each contribute to the Zn(2+) site.

The protein belongs to the aldolase class II family. RhaD subfamily. As to quaternary structure, homotetramer. Zn(2+) serves as cofactor.

The protein resides in the cytoplasm. It catalyses the reaction L-rhamnulose 1-phosphate = (S)-lactaldehyde + dihydroxyacetone phosphate. The protein operates within carbohydrate degradation; L-rhamnose degradation; glycerone phosphate from L-rhamnose: step 3/3. In terms of biological role, catalyzes the reversible cleavage of L-rhamnulose-1-phosphate to dihydroxyacetone phosphate (DHAP) and L-lactaldehyde. The polypeptide is Rhamnulose-1-phosphate aldolase (Pectobacterium atrosepticum (strain SCRI 1043 / ATCC BAA-672) (Erwinia carotovora subsp. atroseptica)).